Consider the following 440-residue polypeptide: Ribosomal protein uS12 methylthiotransferase RimO (440 aa).

The region spanning 5–115 (PTVGFVSLGC…VVNAVHEVVP (111 aa)) is the MTTase N-terminal domain. [4Fe-4S] cluster-binding residues include Cys14, Cys50, Cys79, Cys148, Cys152, and Cys155. One can recognise a Radical SAM core domain in the interval 134–372 (LTPRHYAYLK…MAHQQAISAA (239 aa)). Positions 375–440 (QLKVGKELDV…DEYDLWAEVI (66 aa)) constitute a TRAM domain.

The protein belongs to the methylthiotransferase family. RimO subfamily. It depends on [4Fe-4S] cluster as a cofactor.

The protein resides in the cytoplasm. It carries out the reaction L-aspartate(89)-[ribosomal protein uS12]-hydrogen + (sulfur carrier)-SH + AH2 + 2 S-adenosyl-L-methionine = 3-methylsulfanyl-L-aspartate(89)-[ribosomal protein uS12]-hydrogen + (sulfur carrier)-H + 5'-deoxyadenosine + L-methionine + A + S-adenosyl-L-homocysteine + 2 H(+). Functionally, catalyzes the methylthiolation of an aspartic acid residue of ribosomal protein uS12. In Stutzerimonas stutzeri (strain A1501) (Pseudomonas stutzeri), this protein is Ribosomal protein uS12 methylthiotransferase RimO.